Here is a 143-residue protein sequence, read N- to C-terminus: 3-hydroxyacyl-[acyl-carrier-protein] dehydratase FabZ (143 aa).

Residue His-48 is part of the active site.

It belongs to the thioester dehydratase family. FabZ subfamily.

The protein resides in the cytoplasm. The catalysed reaction is a (3R)-hydroxyacyl-[ACP] = a (2E)-enoyl-[ACP] + H2O. Involved in unsaturated fatty acids biosynthesis. Catalyzes the dehydration of short chain beta-hydroxyacyl-ACPs and long chain saturated and unsaturated beta-hydroxyacyl-ACPs. The polypeptide is 3-hydroxyacyl-[acyl-carrier-protein] dehydratase FabZ (Roseiflexus sp. (strain RS-1)).